The chain runs to 86 residues: Small ribosomal subunit protein bS20 (86 aa).

This sequence belongs to the bacterial ribosomal protein bS20 family.

Functionally, binds directly to 16S ribosomal RNA. The polypeptide is Small ribosomal subunit protein bS20 (Rhodococcus opacus (strain B4)).